We begin with the raw amino-acid sequence, 64 residues long: Large ribosomal subunit protein bL35 (64 aa).

Basic residues predominate over residues 22 to 31; sequence GKVKHGHAYR. A disordered region spans residues 22–64; sequence GKVKHGHAYRSHLAQSKTTKQKRQSRKSTLMNNSDFKRLKKLI.

The protein belongs to the bacterial ribosomal protein bL35 family.

The protein is Large ribosomal subunit protein bL35 of Mesomycoplasma hyopneumoniae (strain 232) (Mycoplasma hyopneumoniae).